Reading from the N-terminus, the 89-residue chain is Small ribosomal subunit protein uS15 (89 aa).

It belongs to the universal ribosomal protein uS15 family. Part of the 30S ribosomal subunit. Forms a bridge to the 50S subunit in the 70S ribosome, contacting the 23S rRNA.

In terms of biological role, one of the primary rRNA binding proteins, it binds directly to 16S rRNA where it helps nucleate assembly of the platform of the 30S subunit by binding and bridging several RNA helices of the 16S rRNA. Functionally, forms an intersubunit bridge (bridge B4) with the 23S rRNA of the 50S subunit in the ribosome. The sequence is that of Small ribosomal subunit protein uS15 from Shewanella woodyi (strain ATCC 51908 / MS32).